The following is a 2148-amino-acid chain: Polyketide synthase 1 (2148 aa).

The tract at residues 19–261 (FIFGDQSSCN…TPLAVHAPYH (243 aa)) is N-terminal acylcarrier protein transacylase domain (SAT). The region spanning 394-829 (ESKIAIIGMS…GGNTALLVED (436 aa)) is the Ketosynthase family 3 (KS3) domain. Active-site for beta-ketoacyl synthase activity residues include cysteine 566, histidine 701, and histidine 745. The tract at residues 929–1233 (AFVFSGQGSQ…PSLMRNKDGW (305 aa)) is malonyl-CoA:ACP transacylase (MAT) domain. Residue serine 1018 is the For acyl/malonyl transferase activity of the active site. The product template (PT) domain stretch occupies residues 1310–1624 (TASVHRIVHE…RKVLNTAMPP (315 aa)). Residues 1314–1447 (HRIVHESVDK…SSLHFEQPKV (134 aa)) are N-terminal hotdog fold. The PKS/mFAS DH domain maps to 1314–1619 (HRIVHESVDK…FQGIPRKVLN (306 aa)). Histidine 1346 (proton acceptor; for dehydratase activity) is an active-site residue. Residues 1474–1619 (LNSRMSSGVI…FQGIPRKVLN (146 aa)) are C-terminal hotdog fold. The active-site Proton donor; for dehydratase activity is aspartate 1533. A disordered region spans residues 1619–1657 (NTAMPPPKSQNEAPVRSAPAKPAAKPPKSASSEHSGHFA). Low complexity predominate over residues 1635–1650 (SAPAKPAAKPPKSASS). The Carrier 1 domain occupies 1678–1752 (RNPMLAVFKI…DLATHLGLDT (75 aa)). The residue at position 1712 (serine 1712) is an O-(pantetheine 4'-phosphoryl)serine. Residues 1755–1790 (SDQSSGQSSSSGGLSPRSDSIGEITSSATTPPSLSP) show a composition bias toward low complexity. A disordered region spans residues 1755–1796 (SDQSSGQSSSSGGLSPRSDSIGEITSSATTPPSLSPRGSVSG). The 78-residue stretch at 1793 to 1870 (SVSGSQCKDV…SFKHMFQQGH (78 aa)) folds into the Carrier 2 domain. O-(pantetheine 4'-phosphoryl)serine is present on serine 1830. The thioesterase (TE) domain stretch occupies residues 1882-2146 (LKQYRATSTL…ERVAAFIRST (265 aa)). The active-site For thioesterase activity is the serine 1973.

In terms of biological role, polyketide synthase; part of the Pks1 gene cluster that mediates the biosynthesis of an anthraquinone derivative pigment that contributes to conidial pigmentation that provides protection from UV radiation, heat and cold stress. The polyketide synthase Pks1 produces 1-acetyl-2,4,6,8-tetrahydroxy-9,10-anthraquinone though condensation of acetyl-CoA with malonyl-CoA. The dehydratase EthD and the laccase Mlac1 further convert the anthraquinone derivative into the final conidial pigment. The polypeptide is Polyketide synthase 1 (Metarhizium guizhouense (strain ARSEF 977)).